The primary structure comprises 568 residues: Cytochrome P450 monooxygenase 41 (568 aa).

Residues 21-41 form a helical membrane-spanning segment; the sequence is LTSLVPLILSVMVCLIATVTI. N-linked (GlcNAc...) asparagine glycans are attached at residues N321 and N377. Position 514 (C514) interacts with heme.

This sequence belongs to the cytochrome P450 family. Requires heme as cofactor.

It is found in the membrane. Its pathway is secondary metabolite biosynthesis. Cytochrome P450 monooxygenase that is able to use 3,5-dimethoxy-trans-stilbene and 3,5,4'-trimethoxy-trans-stilbene as substrates for oxidation. The chain is Cytochrome P450 monooxygenase 41 from Postia placenta (strain ATCC 44394 / Madison 698-R) (Brown rot fungus).